A 372-amino-acid chain; its full sequence is Aminomethyltransferase (372 aa).

The protein belongs to the GcvT family. The glycine cleavage system is composed of four proteins: P, T, L and H.

The catalysed reaction is N(6)-[(R)-S(8)-aminomethyldihydrolipoyl]-L-lysyl-[protein] + (6S)-5,6,7,8-tetrahydrofolate = N(6)-[(R)-dihydrolipoyl]-L-lysyl-[protein] + (6R)-5,10-methylene-5,6,7,8-tetrahydrofolate + NH4(+). Functionally, the glycine cleavage system catalyzes the degradation of glycine. The protein is Aminomethyltransferase of Synechocystis sp. (strain ATCC 27184 / PCC 6803 / Kazusa).